A 320-amino-acid polypeptide reads, in one-letter code: Ferrochelatase (320 aa).

His194 and Glu275 together coordinate Fe cation.

Belongs to the ferrochelatase family. In terms of assembly, monomer.

It localises to the cytoplasm. It catalyses the reaction heme b + 2 H(+) = protoporphyrin IX + Fe(2+). The protein operates within porphyrin-containing compound metabolism; protoheme biosynthesis; protoheme from protoporphyrin-IX: step 1/1. Its function is as follows. Catalyzes the ferrous insertion into protoporphyrin IX. The sequence is that of Ferrochelatase from Escherichia coli O81 (strain ED1a).